Consider the following 619-residue polypeptide: Threonine--tRNA ligase (619 aa).

The tract at residues 1–143 is editing domain; it reads MQLLLIHSDF…SRSIRIGEGE (143 aa). A catalytic region spans residues 201 to 500; it reads PHVELMRRLE…AANGGLPMLP (300 aa). Residues Cys293, His345, and His469 each coordinate Zn(2+).

This sequence belongs to the class-II aminoacyl-tRNA synthetase family. In terms of assembly, homodimer. Zn(2+) serves as cofactor.

It localises to the cytoplasm. The catalysed reaction is tRNA(Thr) + L-threonine + ATP = L-threonyl-tRNA(Thr) + AMP + diphosphate + H(+). Functionally, catalyzes the attachment of threonine to tRNA(Thr) in a two-step reaction: L-threonine is first activated by ATP to form Thr-AMP and then transferred to the acceptor end of tRNA(Thr). Also edits incorrectly charged L-seryl-tRNA(Thr). This chain is Threonine--tRNA ligase, found in Methanothrix thermoacetophila (strain DSM 6194 / JCM 14653 / NBRC 101360 / PT) (Methanosaeta thermophila).